The chain runs to 104 residues: Protein P-30 (104 aa).

Gln-1 is subject to Pyrrolidone carboxylic acid. The active-site Proton acceptor is His-10. 4 disulfides stabilise this stretch: Cys-19/Cys-68, Cys-30/Cys-75, Cys-48/Cys-90, and Cys-87/Cys-104. Substrate is bound at residue 31–35; the sequence is KDKNT. The active-site Proton donor is the His-97.

The protein belongs to the pancreatic ribonuclease family.

Its function is as follows. Basic protein with antiproliferative/cytotoxic activity against several tumor cell lines in vitro, as well as antitumor in vivo. It exhibits a ribonuclease-like activity against high molecular weight ribosomal RNA. This is Protein P-30 from Lithobates pipiens (Northern leopard frog).